The primary structure comprises 431 residues: Chaperone SurA (431 aa).

The signal sequence occupies residues 1-22 (MKLWKPTLISVLSALTLFNAHA). 2 PpiC domains span residues 173–271 (TVQY…KIDD) and 280–380 (VTEV…EVLD).

The protein localises to the periplasm. The catalysed reaction is [protein]-peptidylproline (omega=180) = [protein]-peptidylproline (omega=0). In terms of biological role, chaperone involved in the correct folding and assembly of outer membrane proteins. Recognizes specific patterns of aromatic residues and the orientation of their side chains, which are found more frequently in integral outer membrane proteins. May act in both early periplasmic and late outer membrane-associated steps of protein maturation. This is Chaperone SurA from Vibrio cholerae serotype O1 (strain ATCC 39315 / El Tor Inaba N16961).